Consider the following 580-residue polypeptide: Adenine deaminase 2 (580 aa).

Belongs to the metallo-dependent hydrolases superfamily. Adenine deaminase family. Mn(2+) serves as cofactor.

It carries out the reaction adenine + H2O + H(+) = hypoxanthine + NH4(+). This Latilactobacillus sakei subsp. sakei (strain 23K) (Lactobacillus sakei subsp. sakei) protein is Adenine deaminase 2.